The primary structure comprises 199 residues: MLNALGVICSGRLVQTDFQQISEVQYLINIPEADNVNHVVVFLTGTTPFAEGMAGAVYFSWPDPNAPPTWQFLGYISNSKPSAIFKISQLKKLDEMSNNSAVNVFGANLPISHIAQIGVSIEPESNLMQQTPATTTTDTYYQFGQKMVENFFNFVSSFSVTQSQMMPNPNEAFVPLSTVQTWFTNFQRRLQQNPSFWKS.

The protein belongs to the OPI10 family.

The protein is Protein OPI10 homolog of Aedes aegypti (Yellowfever mosquito).